Consider the following 296-residue polypeptide: 4-hydroxybenzoate octaprenyltransferase (296 aa).

8 helical membrane-spanning segments follow: residues 23 to 43 (IGILLLLWPTLWGIWLASPGW), 46 to 66 (GLVLFVFIAGTVLMRSAGCVM), 99 to 119 (LALALSLVAFILVLQLNPLVV), 141 to 161 (IPQAYLGIAFGFGIPMAFAAI), 163 to 183 (GQLPLEAWILLLANVFWAIAY), 211 to 231 (DVFAVMACYGAFLILMAWVGV), 237 to 257 (WPYFAGLGVAALVALYHYALI), and 265 to 285 (CFKAFLHNNWLGAAIFVGVLA).

It belongs to the UbiA prenyltransferase family. Requires Mg(2+) as cofactor.

The protein resides in the cell inner membrane. It carries out the reaction all-trans-octaprenyl diphosphate + 4-hydroxybenzoate = 4-hydroxy-3-(all-trans-octaprenyl)benzoate + diphosphate. Its pathway is cofactor biosynthesis; ubiquinone biosynthesis. In terms of biological role, catalyzes the prenylation of para-hydroxybenzoate (PHB) with an all-trans polyprenyl group. Mediates the second step in the final reaction sequence of ubiquinone-8 (UQ-8) biosynthesis, which is the condensation of the polyisoprenoid side chain with PHB, generating the first membrane-bound Q intermediate 3-octaprenyl-4-hydroxybenzoate. The sequence is that of 4-hydroxybenzoate octaprenyltransferase from Methylobacillus flagellatus (strain ATCC 51484 / DSM 6875 / VKM B-1610 / KT).